Here is a 296-residue protein sequence, read N- to C-terminus: Developmental pluripotency-associated protein 4 (296 aa).

Basic and acidic residues predominate over residues 1-13 (METAGDKKWSAEE). Positions 1 to 73 (METAGDKKWS…QTRRKVPIPP (73 aa)) are disordered. Residues 23–34 (SSQPSTAPAKAK) are compositionally biased toward low complexity. Positions 42-58 (KSETDNGCKPKEGKPQD) are enriched in basic and acidic residues.

In terms of assembly, interacts with DPPA2. Interacts with PCGF1. As to expression, expressed in pluripotent embryonic cells, but not in differentiated somatic tissues.

The protein resides in the nucleus. May be involved in the maintenance of active epigenetic status of target genes. May inhibit differentiation of embryonic stem (ES) cells into a primitive ectoderm lineage. This chain is Developmental pluripotency-associated protein 4 (Dppa4), found in Mus musculus (Mouse).